The chain runs to 686 residues: Secretin GspD 2 (686 aa).

The first 40 residues, 1 to 40, serve as a signal peptide directing secretion; that stretch reads MFWRDITLSVWRKKTTGLKTKKRLLPLVLAAALCSSPVWA. An N0, contacts GspC2 region spans residues 41–140; sequence EEATFTANFK…VGEGSDNYAG (100 aa). An N1 region spans residues 142 to 206; it reads EMVTKVVPVR…EVIQRVDHAG (65 aa). Residues 207–279 are N2; the sequence is NRTEEVIPLD…LIRRLDSEME (73 aa). Residues 282–357 form an N3 region; it reads GNSQVFYLKY…SLQSVIEQLD (76 aa). The segment at 360-627 is secretin; that stretch reads RAQVHVEALI…VFIRPTILRD (268 aa). The cap gate stretch occupies residues 414-433; the sequence is PQKGSTVISENGATTINPDT. A s domain, contacts AspS2 region spans residues 629–686; that stretch reads MAADGVSQRKYNYMRAEQIYRDEQGLSLMPHTAQPVLPAQNQALPPEVRAFLNAGRTR.

This sequence belongs to the bacterial secretin family. GSP D subfamily. Forms a cylindrical channel with 15 subunits, each of which interacts with the surrounding pilotin AspS2 proteins (also called GspS-beta). Interacts with inner cell membrane protein GspC2 in the periplasm. Forms multimers in the outer membrane. The isolated N0 domain forms dimers that self-assemble into rings.

The protein localises to the cell outer membrane. Functionally, part of a type II secretion system (T2SS, formerly general secretion pathway, GSP) for the export of folded proteins across the outer membrane. This subunit forms the outer membrane channel. In Escherichia coli O78:H11 (strain H10407 / ETEC), this protein is Secretin GspD 2 (gspD2).